We begin with the raw amino-acid sequence, 940 residues long: UvrABC system protein A (940 aa).

33–40 (GVSGSGKS) is an ATP binding site. The C4-type zinc finger occupies 252–279 (CPVCGFTVPELEPRLFSFNAPFGSCPDC). 2 consecutive ABC transporter domains span residues 309 to 586 (WYGK…KKSL) and 606 to 935 (IDKK…QYLK). 639 to 646 (GVSGSGKS) provides a ligand contact to ATP. The C4-type zinc finger occupies 738 to 764 (CEACSGDGIIKIEMHFLPDVYVPCEVC).

The protein belongs to the ABC transporter superfamily. UvrA family. In terms of assembly, forms a heterotetramer with UvrB during the search for lesions.

Its subcellular location is the cytoplasm. In terms of biological role, the UvrABC repair system catalyzes the recognition and processing of DNA lesions. UvrA is an ATPase and a DNA-binding protein. A damage recognition complex composed of 2 UvrA and 2 UvrB subunits scans DNA for abnormalities. When the presence of a lesion has been verified by UvrB, the UvrA molecules dissociate. This is UvrABC system protein A from Lactococcus lactis subsp. lactis (strain IL1403) (Streptococcus lactis).